Reading from the N-terminus, the 229-residue chain is UPF0173 metal-dependent hydrolase SH1218 (229 aa).

This sequence belongs to the UPF0173 family.

The polypeptide is UPF0173 metal-dependent hydrolase SH1218 (Staphylococcus haemolyticus (strain JCSC1435)).